A 158-amino-acid chain; its full sequence is Regulator of sigma D (158 aa).

The protein belongs to the Rsd/AlgQ family. As to quaternary structure, interacts with RpoD.

It localises to the cytoplasm. Binds RpoD and negatively regulates RpoD-mediated transcription activation by preventing the interaction between the primary sigma factor RpoD with the catalytic core of the RNA polymerase and with promoter DNA. May be involved in replacement of the RNA polymerase sigma subunit from RpoD to RpoS during the transition from exponential growth to the stationary phase. This Escherichia coli O6:H1 (strain CFT073 / ATCC 700928 / UPEC) protein is Regulator of sigma D.